We begin with the raw amino-acid sequence, 259 residues long: Flagellar L-ring protein 1 (259 aa).

An N-terminal signal peptide occupies residues M1 to G15. C16 carries N-palmitoyl cysteine lipidation. C16 carries the S-diacylglycerol cysteine lipid modification. The segment at E38 to D63 is disordered.

This sequence belongs to the FlgH family. In terms of assembly, the basal body constitutes a major portion of the flagellar organelle and consists of four rings (L,P,S, and M) mounted on a central rod.

It localises to the cell outer membrane. Its subcellular location is the bacterial flagellum basal body. Functionally, assembles around the rod to form the L-ring and probably protects the motor/basal body from shearing forces during rotation. The polypeptide is Flagellar L-ring protein 1 (flgH1) (Vibrio parahaemolyticus serotype O3:K6 (strain RIMD 2210633)).